Consider the following 356-residue polypeptide: Golgi-resident adenosine 3',5'-bisphosphate 3'-phosphatase (356 aa).

Met-1 is subject to N-acetylmethionine. Residues 1–12 (MAPMGIRLSPLG) are Cytoplasmic-facing. The helical transmembrane segment at 13 to 33 (VAVFFLLGLGVLYHLYSGFLA) threads the bilayer. The Lumenal portion of the chain corresponds to 34 to 356 (GRFSLFGLGG…KLPDLEKSGH (323 aa)). The disordered stretch occupies residues 82–104 (VRESNVLHEKSKGKTREGAEDKM). Residue Asp-108 is the Proton acceptor of the active site. Residues Glu-131, Asp-172, Leu-174, and Asp-175 each coordinate Mg(2+). Residue Thr-177 is the Proton acceptor of the active site. Residues Ser-240 and His-243 each contribute to the AMP site. Asn-257 carries an N-linked (GlcNAc...) asparagine glycan. AMP is bound by residues Gly-266 and Lys-270. Position 298 (Asp-298) interacts with Mg(2+).

This sequence belongs to the inositol monophosphatase superfamily. It depends on Mg(2+) as a cofactor. In terms of processing, contains N-linked glycan resistant to endoglycosydase H.

It localises to the golgi apparatus. The protein resides in the trans-Golgi network membrane. It carries out the reaction adenosine 3',5'-bisphosphate + H2O = AMP + phosphate. Its pathway is sulfur metabolism. Its activity is regulated as follows. Strongly inhibited by lithium. Exhibits 3'-nucleotidase activity toward adenosine 3',5'-bisphosphate (PAP), namely hydrolyzes adenosine 3',5'-bisphosphate into adenosine 5'-monophosphate (AMP) and a phosphate. May play a role in the formation of skeletal elements derived through endochondral ossification, possibly by clearing adenosine 3',5'-bisphosphate produced by Golgi sulfotransferases during glycosaminoglycan sulfation. Has no activity toward 3'-phosphoadenosine 5'-phosphosulfate (PAPS) or inositol phosphate (IP) substrates including I(1)P, I(1,4)P2, I(1,3,4)P3, I(1,4,5)P3 and I(1,3,4,5)P4. The chain is Golgi-resident adenosine 3',5'-bisphosphate 3'-phosphatase (Bpnt2) from Rattus norvegicus (Rat).